The primary structure comprises 335 residues: MFVDQITLELRAGKGGNGVVAWRKEKYLPKGGPYGGNGGNGGSILIEAVTNMYSFEEYRNLRFLKAGDGQAGASNNRTGKNGKDFVLKVPEGTLLRDAETGELIHDFTKDGERIVVCQGGRGGKGNVFFKTSTNRAPTKATPGKPGEIRLVELELKLIADIGLVGFPNAGKSTLFNTLARTEVKVGAYPFTTLHPSLGLVHQEGYLYQKPWIMADIPGIIEGASQNRGLGLDFLRHIERTRLLLFVVDISGIERSSPEKDLQILIGELLAYKEDLKNKSMVIALNKIDQLLPDEREERLALLKQQFPDQEFILLSGLTGEGVDVLHDLFKSKLSE.

The Obg domain occupies 1–158 (MFVDQITLEL…RLVELELKLI (158 aa)). The OBG-type G domain occupies 159–334 (ADIGLVGFPN…LHDLFKSKLS (176 aa)). GTP is bound by residues 165-172 (GFPNAGKS), 190-194 (FTTLH), 215-218 (DIPG), 285-288 (NKID), and 315-317 (SGL). The Mg(2+) site is built by Ser172 and Thr192.

It belongs to the TRAFAC class OBG-HflX-like GTPase superfamily. OBG GTPase family. In terms of assembly, monomer. Requires Mg(2+) as cofactor.

Its subcellular location is the cytoplasm. Its function is as follows. An essential GTPase which binds GTP, GDP and possibly (p)ppGpp with moderate affinity, with high nucleotide exchange rates and a fairly low GTP hydrolysis rate. Plays a role in control of the cell cycle, stress response, ribosome biogenesis and in those bacteria that undergo differentiation, in morphogenesis control. The protein is GTPase Obg of Chlamydia muridarum (strain MoPn / Nigg).